Here is a 264-residue protein sequence, read N- to C-terminus: MSVDLFDVKGKIALVTGSTHGLGMAMAKGLGLAGATIVVNGNSSQDKIDSAIAEYEKEGIKAVGYKFNVAKEDEVQAAVSKIEAEVGPIDILINNAGIIKRTPLLEMEVADFKEVVDIDLVSPFIVSKHVVKNMVERKAGKVINICSMMSELGRNSVGAYAAAKGGLKMLTQNMATEWAKYNIQVNGIGPGYFATSQTAPIRVDGHPFNDFIINRTPAAKWGDPNDLAGAAIFLSSKASDFVNGHVVYVDGGILATIGKPSNEE.

14–38 lines the NAD(+) pocket; sequence LVTGSTHGLGMAMAKGLGLAGATIV. Ser-147 contributes to the substrate binding site. Tyr-160 (proton acceptor) is an active-site residue.

It belongs to the short-chain dehydrogenases/reductases (SDR) family. In terms of assembly, homotetramer.

It is found in the cytoplasm. It carries out the reaction 2-dehydro-3-deoxy-D-gluconate + NAD(+) = 3-deoxy-D-glycero-2,5-hexodiulosonate + NADH + H(+). In terms of biological role, 2-dehydro-3-deoxy-D-gluconate 5-dehydrogenase involved in ulvan degradation. Ulvan is the main polysaccharide component of the Ulvales (green seaweed) cell wall. It is composed of disaccharide building blocks comprising 3-sulfated rhamnose (Rha3S) linked to D-glucuronic acid (GlcA), L-iduronic acid (IduA), or D-xylose (Xyl). Catalyzes the reversible reduction of 2,5-diketo-3-deoxygluconate (DKII or 4,6-dihydroxy-2,5-dioxohexanoate) into 2-keto-3-deoxygluconate (KDG or 2-dehydro-3-deoxygluconate) with a concomitant oxidation of NADH. This is 2-dehydro-3-deoxy-D-gluconate 5-dehydrogenase (kduD) from Formosa agariphila (strain DSM 15362 / KCTC 12365 / LMG 23005 / KMM 3901 / M-2Alg 35-1).